We begin with the raw amino-acid sequence, 87 residues long: Small ribosomal subunit protein bS18 (87 aa).

A disordered region spans residues 1 to 21; sequence MRHKPTPPKGNKSLGNALASK.

Belongs to the bacterial ribosomal protein bS18 family. In terms of assembly, part of the 30S ribosomal subunit. Forms a tight heterodimer with protein bS6.

Functionally, binds as a heterodimer with protein bS6 to the central domain of the 16S rRNA, where it helps stabilize the platform of the 30S subunit. The sequence is that of Small ribosomal subunit protein bS18 from Chlorobium phaeobacteroides (strain DSM 266 / SMG 266 / 2430).